Reading from the N-terminus, the 225-residue chain is Endo-1,4-beta-xylanase (225 aa).

The first 31 residues, 1–31 (MVGFTPVALAALAATGALAFPAGNATELEKR), serve as a signal peptide directing secretion. Glutamine 32 is subject to Pyrrolidone carboxylic acid. The GH11 domain occupies 32–222 (QTTPNSEGWH…SSGYARITVA (191 aa)). The Nucleophile role is filled by glutamate 117. Cysteine 141 and cysteine 185 are oxidised to a cystine. The Proton donor role is filled by glutamate 209.

It carries out the reaction Endohydrolysis of (1-&gt;4)-beta-D-xylosidic linkages in xylans.. The protein operates within glycan degradation; xylan degradation. This Thermomyces lanuginosus (Humicola lanuginosa) protein is Endo-1,4-beta-xylanase (XYNA).